A 202-amino-acid chain; its full sequence is Adenylyl-sulfate kinase (202 aa).

35–42 (GLSGSGKS) serves as a coordination point for ATP. Serine 109 functions as the Phosphoserine intermediate in the catalytic mechanism.

The protein belongs to the APS kinase family.

It carries out the reaction adenosine 5'-phosphosulfate + ATP = 3'-phosphoadenylyl sulfate + ADP + H(+). It functions in the pathway sulfur metabolism; hydrogen sulfide biosynthesis; sulfite from sulfate: step 2/3. Catalyzes the synthesis of activated sulfate. The chain is Adenylyl-sulfate kinase from Bacteroides fragilis (strain ATCC 25285 / DSM 2151 / CCUG 4856 / JCM 11019 / LMG 10263 / NCTC 9343 / Onslow / VPI 2553 / EN-2).